The following is a 130-amino-acid chain: Histone H2A type 1-E (130 aa).

Residues 1–22 form a disordered region; that stretch reads MSGRGKQGGKARAKAKTRSSRA. N-acetylserine is present on Ser2. Phosphoserine; by RPS6KA5 is present on Ser2. Citrulline; alternate is present on Arg4. Residue Arg4 is modified to Symmetric dimethylarginine; by PRMT5; alternate. N6-(2-hydroxyisobutyryl)lysine; alternate occurs at positions 6 and 10. At Lys6 the chain carries N6-acetyllysine; alternate. Residues 7-19 are compositionally biased toward basic residues; it reads QGGKARAKAKTRS. N6-lactoyllysine; alternate is present on Lys10. Residue Lys10 is modified to N6-succinyllysine; alternate. Glycyl lysine isopeptide (Lys-Gly) (interchain with G-Cter in ubiquitin) cross-links involve residues Lys14 and Lys16. Lys37 carries the post-translational modification N6-(2-hydroxyisobutyryl)lysine; alternate. Residue Lys37 is modified to N6-(beta-hydroxybutyryl)lysine; alternate. Lys37 is modified (N6-crotonyllysine; alternate). An N6-(2-hydroxyisobutyryl)lysine mark is found at Lys75 and Lys76. An N6-(2-hydroxyisobutyryl)lysine; alternate modification is found at Lys96. The residue at position 96 (Lys96) is an N6-succinyllysine; alternate. An N6-glutaryllysine; alternate modification is found at Lys96. Position 105 is an N5-methylglutamine (Gln105). Lys119 is modified (N6-(2-hydroxyisobutyryl)lysine; alternate). Residues Lys119 and Lys120 each carry the N6-crotonyllysine; alternate modification. Residues Lys119 and Lys120 each carry the N6-glutaryllysine; alternate modification. Lys120 is covalently cross-linked (Glycyl lysine isopeptide (Lys-Gly) (interchain with G-Cter in ubiquitin); alternate). Thr121 is modified (phosphothreonine; by DCAF1). Residue Lys126 is modified to N6-crotonyllysine; alternate. N6-glutaryllysine; alternate is present on Lys126.

The protein belongs to the histone H2A family. As to quaternary structure, the nucleosome is a histone octamer containing two molecules each of H2A, H2B, H3 and H4 assembled in one H3-H4 heterotetramer and two H2A-H2B heterodimers. The octamer wraps approximately 147 bp of DNA. Deiminated on Arg-4 in granulocytes upon calcium entry. In terms of processing, monoubiquitination of Lys-120 (H2AK119Ub) by RING1, TRIM37 and RNF2/RING2 complex gives a specific tag for epigenetic transcriptional repression and participates in X chromosome inactivation of female mammals. It is involved in the initiation of both imprinted and random X inactivation. Ubiquitinated H2A is enriched in inactive X chromosome chromatin. Ubiquitination of H2A functions downstream of methylation of 'Lys-27' of histone H3 (H3K27me). H2AK119Ub by RNF2/RING2 can also be induced by ultraviolet and may be involved in DNA repair. Following DNA double-strand breaks (DSBs), it is ubiquitinated through 'Lys-63' linkage of ubiquitin moieties by the E2 ligase UBE2N and the E3 ligases RNF8 and RNF168, leading to the recruitment of repair proteins to sites of DNA damage. Ubiquitination at Lys-14 and Lys-16 (H2AK13Ub and H2AK15Ub, respectively) in response to DNA damage is initiated by RNF168 that mediates monoubiquitination at these 2 sites, and 'Lys-63'-linked ubiquitin are then conjugated to monoubiquitin; RNF8 is able to extend 'Lys-63'-linked ubiquitin chains in vitro. H2AK119Ub and ionizing radiation-induced 'Lys-63'-linked ubiquitination (H2AK13Ub and H2AK15Ub) are distinct events. Post-translationally, phosphorylation on Ser-2 (H2AS1ph) is enhanced during mitosis. Phosphorylation on Ser-2 by RPS6KA5/MSK1 directly represses transcription. Acetylation of H3 inhibits Ser-2 phosphorylation by RPS6KA5/MSK1. Phosphorylation at Thr-121 (H2AT120ph) by DCAF1 is present in the regulatory region of many tumor suppresor genes and down-regulates their transcription. Symmetric dimethylation on Arg-4 by the PRDM1/PRMT5 complex may play a crucial role in the germ-cell lineage. In terms of processing, glutamine methylation at Gln-105 (H2AQ104me) by FBL is specifically dedicated to polymerase I. It is present at 35S ribosomal DNA locus and impairs binding of the FACT complex. Post-translationally, crotonylation (Kcr) is specifically present in male germ cells and marks testis-specific genes in post-meiotic cells, including X-linked genes that escape sex chromosome inactivation in haploid cells. Crotonylation marks active promoters and enhancers and confers resistance to transcriptional repressors. It is also associated with post-meiotically activated genes on autosomes. Lactylated in macrophages by EP300/P300 by using lactoyl-CoA directly derived from endogenous or exogenous lactate, leading to stimulates gene transcription.

It localises to the nucleus. It is found in the chromosome. Core component of nucleosome. Nucleosomes wrap and compact DNA into chromatin, limiting DNA accessibility to the cellular machineries which require DNA as a template. Histones thereby play a central role in transcription regulation, DNA repair, DNA replication and chromosomal stability. DNA accessibility is regulated via a complex set of post-translational modifications of histones, also called histone code, and nucleosome remodeling. The sequence is that of Histone H2A type 1-E from Rattus norvegicus (Rat).